The sequence spans 332 residues: DNA-directed RNA polymerase subunit alpha (332 aa).

Positions 1–231 (MQTNLLKPKT…EQLAVFAQLD (231 aa)) are alpha N-terminal domain (alpha-NTD). The alpha C-terminal domain (alpha-CTD) stretch occupies residues 252-332 (FDPILLRPVD…NWPPAGLEKR (81 aa)).

Belongs to the RNA polymerase alpha chain family. In terms of assembly, homodimer. The RNAP catalytic core consists of 2 alpha, 1 beta, 1 beta' and 1 omega subunit. When a sigma factor is associated with the core the holoenzyme is formed, which can initiate transcription.

It carries out the reaction RNA(n) + a ribonucleoside 5'-triphosphate = RNA(n+1) + diphosphate. In terms of biological role, DNA-dependent RNA polymerase catalyzes the transcription of DNA into RNA using the four ribonucleoside triphosphates as substrates. In Delftia acidovorans (strain DSM 14801 / SPH-1), this protein is DNA-directed RNA polymerase subunit alpha.